Here is a 543-residue protein sequence, read N- to C-terminus: CTP synthase (543 aa).

The tract at residues M1–L267 is amidoligase domain. S13 lines the CTP pocket. Residue S13 participates in UTP binding. ATP contacts are provided by residues S14–I19 and D71. Mg(2+) contacts are provided by D71 and E141. CTP-binding positions include D148–E150, K188–Q193, and K224. UTP is bound by residues K188–Q193 and K224. In terms of domain architecture, Glutamine amidotransferase type-1 spans E292–R534. G354 contacts L-glutamine. Catalysis depends on C381, which acts as the Nucleophile; for glutamine hydrolysis. L-glutamine is bound by residues L382–Q385, E405, and R462. Residues H507 and E509 contribute to the active site.

Belongs to the CTP synthase family. As to quaternary structure, homotetramer.

The catalysed reaction is UTP + L-glutamine + ATP + H2O = CTP + L-glutamate + ADP + phosphate + 2 H(+). The enzyme catalyses L-glutamine + H2O = L-glutamate + NH4(+). It catalyses the reaction UTP + NH4(+) + ATP = CTP + ADP + phosphate + 2 H(+). It functions in the pathway pyrimidine metabolism; CTP biosynthesis via de novo pathway; CTP from UDP: step 2/2. Allosterically activated by GTP, when glutamine is the substrate; GTP has no effect on the reaction when ammonia is the substrate. The allosteric effector GTP functions by stabilizing the protein conformation that binds the tetrahedral intermediate(s) formed during glutamine hydrolysis. Inhibited by the product CTP, via allosteric rather than competitive inhibition. In terms of biological role, catalyzes the ATP-dependent amination of UTP to CTP with either L-glutamine or ammonia as the source of nitrogen. Regulates intracellular CTP levels through interactions with the four ribonucleotide triphosphates. The chain is CTP synthase from Thermosynechococcus vestitus (strain NIES-2133 / IAM M-273 / BP-1).